The chain runs to 266 residues: Tryptophan synthase alpha chain (266 aa).

Active-site proton acceptor residues include Glu49 and Asp60.

Belongs to the TrpA family. Tetramer of two alpha and two beta chains.

It catalyses the reaction (1S,2R)-1-C-(indol-3-yl)glycerol 3-phosphate + L-serine = D-glyceraldehyde 3-phosphate + L-tryptophan + H2O. It participates in amino-acid biosynthesis; L-tryptophan biosynthesis; L-tryptophan from chorismate: step 5/5. Functionally, the alpha subunit is responsible for the aldol cleavage of indoleglycerol phosphate to indole and glyceraldehyde 3-phosphate. This is Tryptophan synthase alpha chain from Synechococcus elongatus (strain ATCC 33912 / PCC 7942 / FACHB-805) (Anacystis nidulans R2).